A 424-amino-acid chain; its full sequence is Elongation factor 1-alpha (424 aa).

The 219-residue stretch at 5–223 folds into the tr-type G domain; the sequence is KPHMNLVIIG…NALQVPAKPV (219 aa). Residues 14–21 are G1; that stretch reads GHVDHGKS. 14 to 21 is a GTP binding site; that stretch reads GHVDHGKS. Mg(2+) is bound at residue Ser21. The interval 70–74 is G2; sequence GVTID. The tract at residues 91–94 is G3; the sequence is DAPG. Residues 91–95 and 148–151 contribute to the GTP site; these read DAPGH and NKMD. A G4 region spans residues 148–151; that stretch reads NKMD. The interval 187–189 is G5; sequence SGY.

The protein belongs to the TRAFAC class translation factor GTPase superfamily. Classic translation factor GTPase family. EF-Tu/EF-1A subfamily.

It localises to the cytoplasm. The enzyme catalyses GTP + H2O = GDP + phosphate + H(+). GTP hydrolase that promotes the GTP-dependent binding of aminoacyl-tRNA to the A-site of ribosomes during protein biosynthesis. The chain is Elongation factor 1-alpha from Picrophilus torridus (strain ATCC 700027 / DSM 9790 / JCM 10055 / NBRC 100828 / KAW 2/3).